The primary structure comprises 411 residues: Citrate synthase (411 aa).

Active-site residues include His-304 and Asp-363.

Belongs to the citrate synthase family.

It carries out the reaction oxaloacetate + acetyl-CoA + H2O = citrate + CoA + H(+). It participates in carbohydrate metabolism; tricarboxylic acid cycle; isocitrate from oxaloacetate: step 1/2. The polypeptide is Citrate synthase (gltA) (Rickettsia canadensis).